A 119-amino-acid polypeptide reads, in one-letter code: Lamprin 1.8-10 (119 aa).

Positions 1 to 19 (MAATMQALLVIALLHLATA) are cleaved as a signal peptide. 7 tandem repeats follow at residues 41 to 45 (GGLGY), 46 to 50 (GGLGY), 51 to 55 (GGLGY), 56 to 60 (GGLGV), 61 to 65 (AGLGY), 66 to 70 (GGLGY), and 86 to 90 (GGLGY). The segment at 41–90 (GGLGYGGLGYGGLGYGGLGVAGLGYGGLGYPGAALGGAYTHHAALGGLGY) is 7 X 5 AA approximate repeats.

In terms of assembly, the polymeric lamprin chains self-aggregate to form fibers and have secondary structures particularly rich in beta-sheets and in beta-turns.

The protein localises to the secreted. The protein resides in the extracellular space. It localises to the extracellular matrix. Its function is as follows. Self-aggregating protein that is part of the soluble form of lamprin. The chain is Lamprin 1.8-10 from Petromyzon marinus (Sea lamprey).